The sequence spans 138 residues: Translation initiation factor 2 subunit beta (138 aa).

Belongs to the eIF-2-beta/eIF-5 family. As to quaternary structure, heterotrimer composed of an alpha, a beta and a gamma chain.

In terms of biological role, eIF-2 functions in the early steps of protein synthesis by forming a ternary complex with GTP and initiator tRNA. This Methanococcus maripaludis (strain C6 / ATCC BAA-1332) protein is Translation initiation factor 2 subunit beta.